Reading from the N-terminus, the 251-residue chain is Probable phosphatase Sama_2233 (251 aa).

H8, H10, H16, H41, E74, H102, H132, D193, and H195 together coordinate Zn(2+).

Belongs to the PHP family. Zn(2+) serves as cofactor.

In Shewanella amazonensis (strain ATCC BAA-1098 / SB2B), this protein is Probable phosphatase Sama_2233.